A 410-amino-acid chain; its full sequence is Solute carrier family 52, riboflavin transporter, member 3 (410 aa).

A run of 3 helical transmembrane segments spans residues I3–L23, L40–L60, and V73–L93. N-linked (GlcNAc...) asparagine glycosylation occurs at N157. 6 consecutive transmembrane segments (helical) span residues F158–F178, F239–L259, L277–P297, L301–M321, A334–V354, and A369–F389.

Belongs to the riboflavin transporter family.

Its subcellular location is the cell membrane. It carries out the reaction riboflavin(in) = riboflavin(out). In terms of biological role, plasma membrane transporter mediating the uptake by cells of the water soluble vitamin B2/riboflavin that plays a key role in biochemical oxidation-reduction reactions of the carbohydrate, lipid, and amino acid metabolism. This is Solute carrier family 52, riboflavin transporter, member 3 (slc52a3) from Osmerus mordax (Rainbow smelt).